The chain runs to 333 residues: Protein amalgam (333 aa).

A signal peptide spans 1-23; sequence MARLRLLIGLIFCLAISLDSVLS. One can recognise an Ig-like V-type domain in the interval 25 to 128; that stretch reads PVISQISKDV…VLVSATEKVT (104 aa). Asn-45 and Asn-86 each carry an N-linked (GlcNAc...) asparagine glycan. Intrachain disulfides connect Cys-46/Cys-117, Cys-161/Cys-208, and Cys-251/Cys-307. Ig-like C2-type domains lie at 139–223 and 230–323; these read PVIA…RLIR and PQIA…LHLF. A glycan (N-linked (GlcNAc...) asparagine) is linked at Asn-308.

It localises to the cell membrane. The chain is Protein amalgam (Ama) from Drosophila melanogaster (Fruit fly).